Reading from the N-terminus, the 94-residue chain is Co-chaperonin GroES (94 aa).

The protein belongs to the GroES chaperonin family. In terms of assembly, heptamer of 7 subunits arranged in a ring. Interacts with the chaperonin GroEL.

It is found in the cytoplasm. Its function is as follows. Together with the chaperonin GroEL, plays an essential role in assisting protein folding. The GroEL-GroES system forms a nano-cage that allows encapsulation of the non-native substrate proteins and provides a physical environment optimized to promote and accelerate protein folding. GroES binds to the apical surface of the GroEL ring, thereby capping the opening of the GroEL channel. This is Co-chaperonin GroES from Streptococcus pneumoniae serotype 19F (strain G54).